Reading from the N-terminus, the 255-residue chain is tRNA (guanine-N(7)-)-methyltransferase (255 aa).

The disordered stretch occupies residues 1–30 (MMHDDPNEAGLPPDDAALPDEAADGADEVN). A compositionally biased stretch (acidic residues) spans 17-27 (ALPDEAADGAD). S-adenosyl-L-methionine is bound by residues E86, E111, D138, and D161. D161 is a catalytic residue. Substrate is bound by residues K165, D197, and 232–235 (TKFE).

It belongs to the class I-like SAM-binding methyltransferase superfamily. TrmB family.

The enzyme catalyses guanosine(46) in tRNA + S-adenosyl-L-methionine = N(7)-methylguanosine(46) in tRNA + S-adenosyl-L-homocysteine. It participates in tRNA modification; N(7)-methylguanine-tRNA biosynthesis. In terms of biological role, catalyzes the formation of N(7)-methylguanine at position 46 (m7G46) in tRNA. This Burkholderia vietnamiensis (strain G4 / LMG 22486) (Burkholderia cepacia (strain R1808)) protein is tRNA (guanine-N(7)-)-methyltransferase.